A 153-amino-acid polypeptide reads, in one-letter code: Arginine repressor (153 aa).

The protein belongs to the ArgR family.

Its subcellular location is the cytoplasm. Its pathway is amino-acid biosynthesis; L-arginine biosynthesis [regulation]. Its function is as follows. Regulates arginine biosynthesis genes. This is Arginine repressor from Actinobacillus pleuropneumoniae serotype 3 (strain JL03).